A 73-amino-acid chain; its full sequence is uncharacterized protein (73 aa).

The protein belongs to the asfivirus DP63R family.

This is an uncharacterized protein from African swine fever virus (isolate Tick/Malawi/Lil 20-1/1983) (ASFV).